The primary structure comprises 420 residues: Nucleoporin NUP42 (420 aa).

Residues 1–25 (MTICQFFLQGRCRFGDRCWNEHPGA) form a C3H1-type zinc finger. The FG 1 repeat unit spans residues 14-15 (FG). Residues 25 to 111 (ARGAGGARQP…FASPLSDEQK (87 aa)) are disordered. Positions 42–67 (SGNNRRGWNASSQRYSNVIQPSSFPK) are enriched in polar residues. 10 FG repeats span residues 82-83 (FG), 95-96 (FG), 218-219 (FG), 220-221 (FG), 228-229 (FG), 265-266 (FG), 271-272 (FG), 288-289 (FG), 345-346 (FG), and 364-365 (FG). Positions 87–102 (SGASTSRGFGSSQNPF) are enriched in polar residues. The segment at 323–345 (MAASPSGSTTAPPLRSGSSVVGF) is disordered. The tract at residues 365–420 (GGSGISTSVLASGAADNALFTPRDQLMKEELEQFQSQRFTLGKIPLKPPPVELLTV) is interaction with GLE1.

Probable component of the nuclear pore complex (NPC). Interacts with nuclear export protein NXF1. Interacts with GLE1. Able to form a heterotrimer with NUP155 and GLE1 in vitro. Interacts with XPO1. In terms of processing, O-glycosylated.

The protein localises to the nucleus. It is found in the nuclear pore complex. The protein resides in the nucleus membrane. Required for the export of mRNAs containing poly(A) tails from the nucleus into the cytoplasm. This Mus musculus (Mouse) protein is Nucleoporin NUP42 (Nup42).